A 405-amino-acid chain; its full sequence is Probable tRNA sulfurtransferase (405 aa).

In terms of domain architecture, THUMP spans 60 to 165 (EGVIERLRHV…QDAIYLTNQV (106 aa)). Residues 183–184 (ML), 208–209 (HF), Arg265, Gly287, and Gln296 each bind ATP.

This sequence belongs to the ThiI family.

It is found in the cytoplasm. The enzyme catalyses [ThiI sulfur-carrier protein]-S-sulfanyl-L-cysteine + a uridine in tRNA + 2 reduced [2Fe-2S]-[ferredoxin] + ATP + H(+) = [ThiI sulfur-carrier protein]-L-cysteine + a 4-thiouridine in tRNA + 2 oxidized [2Fe-2S]-[ferredoxin] + AMP + diphosphate. It carries out the reaction [ThiS sulfur-carrier protein]-C-terminal Gly-Gly-AMP + S-sulfanyl-L-cysteinyl-[cysteine desulfurase] + AH2 = [ThiS sulfur-carrier protein]-C-terminal-Gly-aminoethanethioate + L-cysteinyl-[cysteine desulfurase] + A + AMP + 2 H(+). It functions in the pathway cofactor biosynthesis; thiamine diphosphate biosynthesis. Catalyzes the ATP-dependent transfer of a sulfur to tRNA to produce 4-thiouridine in position 8 of tRNAs, which functions as a near-UV photosensor. Also catalyzes the transfer of sulfur to the sulfur carrier protein ThiS, forming ThiS-thiocarboxylate. This is a step in the synthesis of thiazole, in the thiamine biosynthesis pathway. The sulfur is donated as persulfide by IscS. In Latilactobacillus sakei subsp. sakei (strain 23K) (Lactobacillus sakei subsp. sakei), this protein is Probable tRNA sulfurtransferase.